Here is a 520-residue protein sequence, read N- to C-terminus: Beta-2-syntrophin (520 aa).

The segment at E45 to R95 is disordered. Residues L63 to G72 show a composition bias toward low complexity. The segment covering P73–G82 has biased composition (pro residues). Phosphoserine is present on residues S75, S90, S109, S191, S202, S213, S373, and S375. The segment covering P83–V93 has biased composition (low complexity). Positions R95–R178 constitute a PDZ domain. 2 consecutive PH domains span residues I143 to M280 and E305 to H417. The segment at W195 to T220 is disordered. Positions G197–S211 are enriched in low complexity. The 57-residue stretch at P464 to V520 folds into the SU domain. Residues P498 to V520 are calmodulin-binding.

It belongs to the syntrophin family. In terms of assembly, monomer and homodimer. Interacts with the dystrophin protein DMD and related protein DTNA; and with the other members of the syntrophin family: SNTA1 and SNTB1. Interacts with the neuroregulin receptor ERBB4. Interacts with PTPRN when phosphorylated, protecting PTPRN from protein cleavage by CAPN1. Dephosphorylation upon insulin stimulation disrupts the interaction with PTPRN and results in the cleavage of PTPRN. Interacts with the sodium channel proteins SCN4A and SCN5A. Interacts with SAST, MAST205, microtubules and microtubule-associated proteins. Interacts with the dystrophin related protein UTRN. Interacts with DTNB. Post-translationally, phosphorylated. Partially dephosphorylated upon insulin stimulation. Ubiquitous. Expressed at high levels in the testis.

The protein resides in the membrane. The protein localises to the cytoplasmic vesicle. It is found in the secretory vesicle membrane. Its subcellular location is the cell junction. It localises to the cytoplasm. The protein resides in the cytoskeleton. Functionally, adapter protein that binds to and probably organizes the subcellular localization of a variety of membrane proteins. May link various receptors to the actin cytoskeleton and the dystrophin glycoprotein complex. May play a role in the regulation of secretory granules via its interaction with PTPRN. The sequence is that of Beta-2-syntrophin (Sntb2) from Mus musculus (Mouse).